Consider the following 94-residue polypeptide: Pyrimidine/purine nucleoside phosphorylase (94 aa).

Belongs to the nucleoside phosphorylase PpnP family.

It catalyses the reaction a purine D-ribonucleoside + phosphate = a purine nucleobase + alpha-D-ribose 1-phosphate. The enzyme catalyses adenosine + phosphate = alpha-D-ribose 1-phosphate + adenine. It carries out the reaction cytidine + phosphate = cytosine + alpha-D-ribose 1-phosphate. The catalysed reaction is guanosine + phosphate = alpha-D-ribose 1-phosphate + guanine. It catalyses the reaction inosine + phosphate = alpha-D-ribose 1-phosphate + hypoxanthine. The enzyme catalyses thymidine + phosphate = 2-deoxy-alpha-D-ribose 1-phosphate + thymine. It carries out the reaction uridine + phosphate = alpha-D-ribose 1-phosphate + uracil. The catalysed reaction is xanthosine + phosphate = alpha-D-ribose 1-phosphate + xanthine. In terms of biological role, catalyzes the phosphorolysis of diverse nucleosides, yielding D-ribose 1-phosphate and the respective free bases. Can use uridine, adenosine, guanosine, cytidine, thymidine, inosine and xanthosine as substrates. Also catalyzes the reverse reactions. This is Pyrimidine/purine nucleoside phosphorylase from Salmonella heidelberg (strain SL476).